We begin with the raw amino-acid sequence, 471 residues long: Threonine--tRNA ligase catalytic subunit (471 aa).

Residues 8 to 333 (THIDYAYELD…YLEHRRGRMP (326 aa)) are catalytic. Zn(2+) contacts are provided by C112, H166, and H310.

The protein belongs to the class-II aminoacyl-tRNA synthetase family. Homodimer. Probably interacts with its editing subunit. Zn(2+) serves as cofactor.

Its subcellular location is the cytoplasm. It carries out the reaction tRNA(Thr) + L-threonine + ATP = L-threonyl-tRNA(Thr) + AMP + diphosphate + H(+). In terms of biological role, catalyzes the attachment of threonine to tRNA(Thr) in a two-step reaction: L-threonine is first activated by ATP to form Thr-AMP and then transferred to the acceptor end of tRNA(Thr). This protein is probably not able to deacylate mischarged L-seryl-tRNA(Thr) as it lacks the appropriate domain. The sequence is that of Threonine--tRNA ligase catalytic subunit from Aeropyrum pernix (strain ATCC 700893 / DSM 11879 / JCM 9820 / NBRC 100138 / K1).